Reading from the N-terminus, the 258-residue chain is 6-phosphogluconolactonase (258 aa).

At alanine 2 the chain carries N-acetylalanine. Serine 49 is modified (phosphoserine). Lysine 180 bears the N6-acetyllysine mark.

This sequence belongs to the glucosamine/galactosamine-6-phosphate isomerase family. 6-phosphogluconolactonase subfamily.

Its subcellular location is the cytoplasm. The catalysed reaction is 6-phospho-D-glucono-1,5-lactone + H2O = 6-phospho-D-gluconate + H(+). It functions in the pathway carbohydrate degradation; pentose phosphate pathway; D-ribulose 5-phosphate from D-glucose 6-phosphate (oxidative stage): step 2/3. Hydrolysis of 6-phosphogluconolactone to 6-phosphogluconate. The polypeptide is 6-phosphogluconolactonase (PGLS) (Bos taurus (Bovine)).